Consider the following 378-residue polypeptide: Quinolinate synthase (378 aa).

Residues H59 and S80 each contribute to the iminosuccinate site. C125 lines the [4Fe-4S] cluster pocket. Iminosuccinate is bound by residues 151–153 (YAN) and S168. C212 serves as a coordination point for [4Fe-4S] cluster. Iminosuccinate-binding positions include 238–240 (HPE) and T255. C309 contributes to the [4Fe-4S] cluster binding site.

This sequence belongs to the quinolinate synthase family. Type 1 subfamily. [4Fe-4S] cluster is required as a cofactor.

It is found in the cytoplasm. The enzyme catalyses iminosuccinate + dihydroxyacetone phosphate = quinolinate + phosphate + 2 H2O + H(+). It functions in the pathway cofactor biosynthesis; NAD(+) biosynthesis; quinolinate from iminoaspartate: step 1/1. In terms of biological role, catalyzes the condensation of iminoaspartate with dihydroxyacetone phosphate to form quinolinate. The chain is Quinolinate synthase from Burkholderia mallei (strain NCTC 10247).